The chain runs to 212 residues: Protein G1-like7 (212 aa).

Over residues 1-22 the composition is skewed to low complexity; sequence MDPSGPGPSSAAAGGAPAVAAA. Disordered stretches follow at residues 1–34 and 148–212; these read MDPS…RYES and KARG…PSAS. The ALOG domain maps to 31–158; sequence RYESQKRRDW…ARGIPYEKKK (128 aa). Positions 156–160 match the Nuclear localization signal motif; it reads KKKRK. Over residues 167 to 182 the composition is skewed to low complexity; the sequence is PAGVEPSGSSSAAAAA. The span at 183–194 shows a compositional bias: gly residues; the sequence is AGGGDAGSGGGA. The segment covering 195 to 212 has biased composition (low complexity); it reads AATTTAQPGGSGTAPSAS.

Belongs to the plant homeotic and developmental regulators ALOG protein family.

The protein resides in the nucleus. Functionally, probable transcription regulator that acts as a developmental regulator by promoting cell growth in response to light. This is Protein G1-like7 (G1L7) from Oryza sativa subsp. japonica (Rice).